The chain runs to 232 residues: Multiple organellar RNA editing factor 6, mitochondrial (232 aa).

A mitochondrion-targeting transit peptide spans 1 to 67 (MAKTLSRSTA…TIRTRMDRSG (67 aa)). Residues 208–232 (TNQRGSDKPKYHDRIRNVRRRENMR) are disordered. Over residues 212 to 232 (GSDKPKYHDRIRNVRRRENMR) the composition is skewed to basic and acidic residues.

This sequence belongs to the MORF family. As to quaternary structure, heterodimers with MORF8/RIP1, MORF3/RIP3, MORF6/RIP6, MORF7/RIP7 and MORF9/RIP9.

Its subcellular location is the mitochondrion. In terms of biological role, involved in organellar RNA editing. Required for the processing of few RNA editing sites in mitochondria. The polypeptide is Multiple organellar RNA editing factor 6, mitochondrial (Arabidopsis thaliana (Mouse-ear cress)).